We begin with the raw amino-acid sequence, 72 residues long: MRRSFYHYLMTLKGPAKDSETDFANEAAKDIQFPKQTEDYHELSSYLEMNADYLSNMDIFDELWEKYLENNK.

It belongs to the UPF0346 family.

This Enterococcus faecalis (strain ATCC 700802 / V583) protein is UPF0346 protein EF_1680.